The following is a 176-amino-acid chain: Nucleoside triphosphate/diphosphate phosphatase (176 aa).

Arg-23 (proton donor) is an active-site residue. Mg(2+)-binding residues include Asn-87, Asp-103, Asp-105, Asp-107, Asp-120, and Glu-123.

It belongs to the Ntdp family. Mg(2+) serves as cofactor.

It catalyses the reaction a ribonucleoside 5'-triphosphate + H2O = a ribonucleoside 5'-diphosphate + phosphate + H(+). The catalysed reaction is a ribonucleoside 5'-diphosphate + H2O = a ribonucleoside 5'-phosphate + phosphate + H(+). Functionally, has nucleoside phosphatase activity towards nucleoside triphosphates and nucleoside diphosphates. This is Nucleoside triphosphate/diphosphate phosphatase from Bacillus mycoides (strain KBAB4) (Bacillus weihenstephanensis).